The primary structure comprises 290 residues: Probable septum site-determining protein MinC (290 aa).

This sequence belongs to the MinC family. In terms of assembly, interacts with MinD and FtsZ.

Its function is as follows. Cell division inhibitor that blocks the formation of polar Z ring septums. Rapidly oscillates between the poles of the cell to destabilize FtsZ filaments that have formed before they mature into polar Z rings. Prevents FtsZ polymerization. This Heliobacterium modesticaldum (strain ATCC 51547 / Ice1) protein is Probable septum site-determining protein MinC.